We begin with the raw amino-acid sequence, 638 residues long: Methylmalonyl-CoA mutase small subunit (638 aa).

The span at 1-11 (MSSTDQGTNPA) shows a compositional bias: polar residues. Positions 1–34 (MSSTDQGTNPADTDDLTPTTLSLAGDFPKATEEQ) are disordered.

This sequence belongs to the methylmalonyl-CoA mutase family. Heterodimer of an alpha and a beta chain. It depends on adenosylcob(III)alamin as a cofactor.

The enzyme catalyses (R)-methylmalonyl-CoA = succinyl-CoA. Its pathway is metabolic intermediate metabolism; propanoyl-CoA degradation; succinyl-CoA from propanoyl-CoA: step 3/3. Its function is as follows. Catalyzes the isomerization of succinyl-CoA to methylmalonyl-CoA during synthesis of propionate from tricarboxylic acid-cycle intermediates. In Propionibacterium freudenreichii subsp. shermanii, this protein is Methylmalonyl-CoA mutase small subunit (mutA).